A 307-amino-acid chain; its full sequence is Transaldolase (307 aa).

Residue Lys125 is the Schiff-base intermediate with substrate of the active site.

It belongs to the transaldolase family. Type 1 subfamily. As to quaternary structure, homodimer.

It is found in the cytoplasm. It catalyses the reaction D-sedoheptulose 7-phosphate + D-glyceraldehyde 3-phosphate = D-erythrose 4-phosphate + beta-D-fructose 6-phosphate. The protein operates within carbohydrate degradation; pentose phosphate pathway; D-glyceraldehyde 3-phosphate and beta-D-fructose 6-phosphate from D-ribose 5-phosphate and D-xylulose 5-phosphate (non-oxidative stage): step 2/3. Its function is as follows. Transaldolase is important for the balance of metabolites in the pentose-phosphate pathway. The protein is Transaldolase of Pseudomonas paraeruginosa (strain DSM 24068 / PA7) (Pseudomonas aeruginosa (strain PA7)).